The primary structure comprises 424 residues: Riboflavin biosynthesis protein RibBA (424 aa).

The tract at residues 1 to 206 (MVTCEAGIAS…VDDLITYRWT (206 aa)) is DHBP synthase. D-ribulose 5-phosphate contacts are provided by residues 32–33 (RE), Asp37, 145–149 (RPGHT), and Glu169. Residue Glu33 coordinates Mg(2+). His148 provides a ligand contact to Mg(2+). Residues 207–424 (FDSLVEHVSS…YETVERTSCC (218 aa)) form a GTP cyclohydrolase II region. 257 to 261 (RVHSE) is a GTP binding site. Cys262, Cys273, and Cys275 together coordinate Zn(2+). Residues Gln278, 301-303 (EGR), and Thr323 each bind GTP. Asp335 functions as the Proton acceptor; for GTP cyclohydrolase activity in the catalytic mechanism. The active-site Nucleophile; for GTP cyclohydrolase activity is the Arg337. Residues Thr358 and Lys363 each coordinate GTP.

It in the N-terminal section; belongs to the DHBP synthase family. In the C-terminal section; belongs to the GTP cyclohydrolase II family. Mg(2+) is required as a cofactor. Requires Mn(2+) as cofactor. Zn(2+) serves as cofactor.

It catalyses the reaction D-ribulose 5-phosphate = (2S)-2-hydroxy-3-oxobutyl phosphate + formate + H(+). The catalysed reaction is GTP + 4 H2O = 2,5-diamino-6-hydroxy-4-(5-phosphoribosylamino)-pyrimidine + formate + 2 phosphate + 3 H(+). Its pathway is cofactor biosynthesis; riboflavin biosynthesis; 2-hydroxy-3-oxobutyl phosphate from D-ribulose 5-phosphate: step 1/1. It functions in the pathway cofactor biosynthesis; riboflavin biosynthesis; 5-amino-6-(D-ribitylamino)uracil from GTP: step 1/4. In terms of biological role, catalyzes the conversion of D-ribulose 5-phosphate to formate and 3,4-dihydroxy-2-butanone 4-phosphate. Its function is as follows. Catalyzes the conversion of GTP to 2,5-diamino-6-ribosylamino-4(3H)-pyrimidinone 5'-phosphate (DARP), formate and pyrophosphate. The protein is Riboflavin biosynthesis protein RibBA of Chlamydia muridarum (strain MoPn / Nigg).